Here is a 290-residue protein sequence, read N- to C-terminus: GTPase Era (290 aa).

In terms of domain architecture, Era-type G spans 2-168; it reads KVCIISILGR…IEILKEYAYN (167 aa). Positions 10-17 are G1; sequence GRPNVGKS. 10 to 17 provides a ligand contact to GTP; the sequence is GRPNVGKS. The segment at 36–40 is G2; it reads QTTRD. A G3 region spans residues 57 to 60; the sequence is DTPG. GTP-binding positions include 57 to 61 and 118 to 121; these read DTPGI and SKID. The segment at 118-121 is G4; the sequence is SKID. Positions 147-149 are G5; sequence VSN. The KH type-2 domain occupies 199–275; sequence LTDELPHSIA…TLNLKVKVSN (77 aa).

The protein belongs to the TRAFAC class TrmE-Era-EngA-EngB-Septin-like GTPase superfamily. Era GTPase family. Monomer.

It localises to the cytoplasm. The protein resides in the cell membrane. Functionally, an essential GTPase that binds both GDP and GTP, with rapid nucleotide exchange. Plays a role in 16S rRNA processing and 30S ribosomal subunit biogenesis and possibly also in cell cycle regulation and energy metabolism. This chain is GTPase Era, found in Mycoplasmopsis agalactiae (strain NCTC 10123 / CIP 59.7 / PG2) (Mycoplasma agalactiae).